The chain runs to 292 residues: ATP synthase gamma chain (292 aa).

It belongs to the ATPase gamma chain family. F-type ATPases have 2 components, CF(1) - the catalytic core - and CF(0) - the membrane proton channel. CF(1) has five subunits: alpha(3), beta(3), gamma(1), delta(1), epsilon(1). CF(0) has three main subunits: a, b and c.

It localises to the cell inner membrane. Functionally, produces ATP from ADP in the presence of a proton gradient across the membrane. The gamma chain is believed to be important in regulating ATPase activity and the flow of protons through the CF(0) complex. In Nitrobacter hamburgensis (strain DSM 10229 / NCIMB 13809 / X14), this protein is ATP synthase gamma chain.